We begin with the raw amino-acid sequence, 348 residues long: Ion-translocating oxidoreductase complex subunit D (348 aa).

The next 5 helical transmembrane spans lie at Leu15–Ala35, Tyr36–Ile56, Leu67–Ser87, Ile88–Ala108, and Val125–Ile145. Thr186 is subject to FMN phosphoryl threonine. 5 helical membrane passes run Leu212–Ile232, Ile241–Pro261, Leu265–Thr285, Leu298–Pro318, and Ala320–Gln340.

Belongs to the NqrB/RnfD family. The complex is composed of six subunits: RnfA, RnfB, RnfC, RnfD, RnfE and RnfG. It depends on FMN as a cofactor.

It is found in the cell inner membrane. Part of a membrane-bound complex that couples electron transfer with translocation of ions across the membrane. This Actinobacillus pleuropneumoniae serotype 7 (strain AP76) protein is Ion-translocating oxidoreductase complex subunit D.